We begin with the raw amino-acid sequence, 467 residues long: Cysteine--tRNA ligase (467 aa).

Residue Cys29 coordinates Zn(2+). The 'HIGH' region signature appears at 31–41 (ATVQGEPHIGH). 3 residues coordinate Zn(2+): Cys207, His232, and Glu236. A 'KMSKS' region motif is present at residues 263 to 267 (KMSKS). Lys266 contacts ATP. Residues 446–467 (IDVTDTPNGPEWSLRTARGKAN) form a disordered region.

Belongs to the class-I aminoacyl-tRNA synthetase family. Monomer. Zn(2+) is required as a cofactor.

It localises to the cytoplasm. It catalyses the reaction tRNA(Cys) + L-cysteine + ATP = L-cysteinyl-tRNA(Cys) + AMP + diphosphate. The polypeptide is Cysteine--tRNA ligase (Nocardia farcinica (strain IFM 10152)).